Here is a 393-residue protein sequence, read N- to C-terminus: MDLFEYQAKELFAKHGVPGIQGRVTDSAEGAKTIAMEIGRPVMVKAQVKTGGRGKAGGVKYAATPEEAYQQAKNILGLDIKGHIVKKLLVVEASDIAEEYYLSFLLDRANRTYLAMCSVEGGMEIEEVAATKPERLAKVSVDAVKGVDLACARSIAQQGHLPAEVLDAAAATIAKLWELFVAEDATLVEVNPLVRTPSRGYGSSGKILALDGKVTLDANARFRQPGHAEFEDRAATDPLEWKAKQHNLNYIKLDGEVGIIGNGAGLTMSTFDVVAYAGEQHGGVKPANFLDIGGGASAEVMAASLDVVLGDVQVKSVFVNIFGGITTCDTVATGIVKALEILGDEANKPLVVRLDGNNVGEGRRILAEANHPLVMLVPTMDEAANKAAELART.

One can recognise an ATP-grasp domain in the interval 9 to 242; that stretch reads KELFAKHGVP…RAATDPLEWK (234 aa). Residues K45, 52–54, S94, and E99 contribute to the ATP site; that span reads GRG. Residues N191 and D211 each contribute to the Mg(2+) site. Residues N262 and 324–326 contribute to the substrate site; that span reads GIT.

This sequence belongs to the succinate/malate CoA ligase beta subunit family. Heterotetramer of two alpha and two beta subunits. The cofactor is Mg(2+).

It carries out the reaction succinate + ATP + CoA = succinyl-CoA + ADP + phosphate. The catalysed reaction is GTP + succinate + CoA = succinyl-CoA + GDP + phosphate. It participates in carbohydrate metabolism; tricarboxylic acid cycle; succinate from succinyl-CoA (ligase route): step 1/1. In terms of biological role, succinyl-CoA synthetase functions in the citric acid cycle (TCA), coupling the hydrolysis of succinyl-CoA to the synthesis of either ATP or GTP and thus represents the only step of substrate-level phosphorylation in the TCA. The beta subunit provides nucleotide specificity of the enzyme and binds the substrate succinate, while the binding sites for coenzyme A and phosphate are found in the alpha subunit. The sequence is that of Succinate--CoA ligase [ADP-forming] subunit beta from Mycobacterium leprae (strain Br4923).